A 314-amino-acid chain; its full sequence is Ribonuclease Z (314 aa).

Residues histidine 62, histidine 64, aspartate 66, histidine 67, histidine 139, aspartate 210, and histidine 268 each contribute to the Zn(2+) site. The active-site Proton acceptor is the aspartate 66.

Belongs to the RNase Z family. Homodimer. Zn(2+) is required as a cofactor.

It catalyses the reaction Endonucleolytic cleavage of RNA, removing extra 3' nucleotides from tRNA precursor, generating 3' termini of tRNAs. A 3'-hydroxy group is left at the tRNA terminus and a 5'-phosphoryl group is left at the trailer molecule.. Zinc phosphodiesterase, which displays some tRNA 3'-processing endonuclease activity. Probably involved in tRNA maturation, by removing a 3'-trailer from precursor tRNA. In Rippkaea orientalis (strain PCC 8801 / RF-1) (Cyanothece sp. (strain PCC 8801)), this protein is Ribonuclease Z.